A 293-amino-acid chain; its full sequence is 5'-3' exoribonuclease Rnm (293 aa).

Mn(2+) contacts are provided by His-13, His-15, Asp-20, His-45, Glu-72, His-83, His-198, Asp-255, and His-257.

Belongs to the PHP family. TrpH/YciV subfamily. Requires Mn(2+) as cofactor.

It catalyses the reaction a ribonucleoside 3',5'-bisphosphate + H2O = a ribonucleoside 5'-phosphate + phosphate. Its function is as follows. Exoribonuclease that catalyzes the last steps of 5S, 16S and 23S rRNA 5'-end maturation. Removes 3 nucleotides (nt) from the 5' end of 5S, 16S and 23S rRNA precursors to generate the mature 5' ends. Precursors with longer extensions are not processed (7 nt at the 5' end of pre-23S rRNA or 66 nt at the 5'-end of 16S rRNA are not processed). 5S and 23S rRNA maturation occurs more efficiently and accurately on ribosomal particles as compared to free RNA; the enzyme overdigests free RNA but generates the correct 5'-end in ribosomes from rnm deletion strains. Efficiently catalyzes the hydrolysis of the 3'-phosphate from 3',5'-bis-phosphonucleotides as well as the successive hydrolysis of 5'-phosphomononucleotides from the 5'-end of short pieces of RNA and DNA, with no specificity toward the identity of the nucleotide base. Is more efficient at hydrolyzing RNA oligonucleotides than DNA oligonucleotides. This enzyme can also hydrolyze annealed DNA duplexes, albeit at a catalytic efficiency approximately 10-fold lower than that of the corresponding single-stranded oligonucleotides. The protein is 5'-3' exoribonuclease Rnm of Escherichia coli (strain K12).